The chain runs to 61 residues: Metallothionein-1H (61 aa).

Position 1 is an N-acetylmethionine (Met1). The beta stretch occupies residues 1 to 29 (MDPNCSCEAGGSCACAGSCKCKKCKCTSC). Residues Cys5, Cys7, Cys13, Cys15, Cys19, Cys21, Cys24, Cys26, Cys29, Cys33, Cys34, Cys36, Cys37, Cys41, Cys44, Cys48, Cys50, and Cys57 each coordinate a divalent metal cation. Positions 30–61 (KKSCCSCCPLGCAKCAQGCICKGASEKCSCCA) are alpha. Residue Ser58 is modified to Phosphoserine. Residues Cys59 and Cys60 each contribute to the a divalent metal cation site.

It belongs to the metallothionein superfamily. Type 1 family. Monomer.

Its function is as follows. Metallothioneins have a high content of cysteine residues that bind various heavy metals; these proteins are transcriptionally regulated by both heavy metals and glucocorticoids. The sequence is that of Metallothionein-1H (MT1H) from Homo sapiens (Human).